Consider the following 1136-residue polypeptide: DNA-directed RNA polymerase I subunit RPA2 (1136 aa).

Residues Met-1 to Tyr-24 are disordered. Position 180 (Arg-180) interacts with RNA. Residues Val-194–Tyr-208 are loop B. The segment at Leu-236–Leu-247 is loop A. RNA is bound at residue Asp-367. 2 fork loop regions span residues Leu-439–Leu-453 and Arg-474–Leu-489. Lys-890 contacts RNA. 2 residues coordinate DNA: Arg-1020 and Arg-1036. Phosphoserine is present on Ser-1051. The Zn(2+) site is built by Cys-1071, Cys-1074, Cys-1099, and Cys-1102. The segment at Cys-1071–Cys-1102 adopts a C4-type zinc-finger fold.

It belongs to the RNA polymerase beta chain family. In terms of assembly, component of the RNA polymerase I (Pol I) complex consisting of 13 subunits: a ten-subunit catalytic core composed of POLR1A/RPA1, POLR1B/RPA2, POLR1C/RPAC1, POLR1D/RPAC2, POLR1H/RPA12, POLR2E/RPABC1, POLR2F/RPABC2, POLR2H/RPABC3, POLR2K/RPABC4 and POLR2L/RPABC5; a mobile stalk subunit POLR1F/RPA43 protruding from the core and additional subunits homologous to general transcription factors POLR1E/RPA49 and POLR1G/RPA34. Part of Pol I pre-initiation complex (PIC), in which Pol I core assembles with RRN3 and promoter-bound UTBF and SL1/TIF-IB complex.

It localises to the nucleus. The protein localises to the nucleolus. The protein resides in the chromosome. The enzyme catalyses RNA(n) + a ribonucleoside 5'-triphosphate = RNA(n+1) + diphosphate. Catalytic core component of RNA polymerase I (Pol I), a DNA-dependent RNA polymerase which synthesizes ribosomal RNA precursors using the four ribonucleoside triphosphates as substrates. Transcribes 47S pre-rRNAs from multicopy rRNA gene clusters, giving rise to 5.8S, 18S and 28S ribosomal RNAs. Pol I-mediated transcription cycle proceeds through transcription initiation, transcription elongation and transcription termination stages. During transcription initiation, Pol I pre-initiation complex (PIC) is recruited by the selectivity factor 1 (SL1/TIF-IB) complex bound to the core promoter that precedes an rDNA repeat unit. The PIC assembly bends the promoter favoring the formation of the transcription bubble and promoter escape. Once the polymerase has escaped from the promoter it enters the elongation phase during which RNA is actively polymerized, based on complementarity with the template DNA strand. Highly processive, assembles in structures referred to as 'Miller trees' where many elongating Pol I complexes queue and transcribe the same rDNA coding regions. At terminator sequences downstream of the rDNA gene, PTRF interacts with Pol I and halts Pol I transcription leading to the release of the RNA transcript and polymerase from the DNA. Forms Pol I active center together with the largest subunit POLR1A/RPA1. Appends one nucleotide at a time to the 3' end of the nascent RNA, with POLR1A/RPA1 contributing a Mg(2+)-coordinating DxDGD motif, and POLR1B/RPA2 providing lysine residues believed to facilitate Watson-Crick base pairing between the incoming nucleotide and the template base. Typically, Mg(2+) ions direct a 5' nucleoside triphosphate to form a phosphodiester bond with the 3' hydroxyl of the preceding nucleotide of the nascent RNA, with the elimination of pyrophosphate. Has proofreading activity: Pauses and backtracks to allow the cleavage of a missincorporated nucleotide via POLR1H/RPA12. High Pol I processivity is associated with decreased transcription fidelity. This is DNA-directed RNA polymerase I subunit RPA2 (POLR1B) from Pongo abelii (Sumatran orangutan).